The sequence spans 92 residues: Acylphosphatase (92 aa).

Residues 5-92 enclose the Acylphosphatase-like domain; the sequence is ATAAYVYGVV…TDYKGFTIRY (88 aa). Catalysis depends on residues arginine 20 and asparagine 38.

This sequence belongs to the acylphosphatase family.

The enzyme catalyses an acyl phosphate + H2O = a carboxylate + phosphate + H(+). The chain is Acylphosphatase (acyP) from Pectobacterium atrosepticum (strain SCRI 1043 / ATCC BAA-672) (Erwinia carotovora subsp. atroseptica).